Reading from the N-terminus, the 154-residue chain is Ecotin-like protein 2 (154 aa).

This sequence belongs to the protease inhibitor I11 (ecotin) family.

This is Ecotin-like protein 2 from Leishmania braziliensis.